The chain runs to 105 residues: Heat shock protein HspQ (105 aa).

The tract at residues 75-105 (GEMQEEHPEQPSMDELARSIRQQLQAPRLRN) is disordered.

It belongs to the HspQ family.

It localises to the cytoplasm. In terms of biological role, involved in the degradation of certain denaturated proteins, including DnaA, during heat shock stress. The chain is Heat shock protein HspQ from Cronobacter sakazakii (strain ATCC BAA-894) (Enterobacter sakazakii).